A 1493-amino-acid polypeptide reads, in one-letter code: Mediator of RNA polymerase II transcription subunit 14 (1493 aa).

Disordered stretches follow at residues methionine 1–alanine 51, methionine 71–glycine 110, threonine 408–valine 427, glutamine 674–serine 693, glutamate 894–aspartate 913, and glycine 957–aspartate 997. Basic and acidic residues predominate over residues proline 90–glycine 100.

Belongs to the Mediator complex subunit 14 family. As to quaternary structure, component of the Mediator complex.

The protein resides in the nucleus. Functionally, component of the Mediator complex, a coactivator involved in the regulated transcription of nearly all RNA polymerase II-dependent genes. Mediator functions as a bridge to convey information from gene-specific regulatory proteins to the basal RNA polymerase II transcription machinery. Mediator is recruited to promoters by direct interactions with regulatory proteins and serves as a scaffold for the assembly of a functional preinitiation complex with RNA polymerase II and the general transcription factors. In Mycosarcoma maydis (Corn smut fungus), this protein is Mediator of RNA polymerase II transcription subunit 14 (RGR1).